We begin with the raw amino-acid sequence, 362 residues long: MFLRLFKYLWPERYLPETPAQDPFDENPPPCGPGRVGVLLVNLGTPDEPTRGAIRRYLGEFLSDPRVIEIPRYLWMPILHGLVLTMRPKKLAPRYAGIWMEEGSPLLVYSQRQAAGVRQGLAARGVHAEVELAMRYGKPSIPAAITALRERGCDHILAVPLYPQYAASTTATVVDAVTRHAGRLRDQPALRFVKRFHNDPAYVEAQAGRIAEFWQAHGRPQKLVMSFHGLPRYSIELGDPYYRDCLDTARLLRERLGLREDEVEVTFQSRFGSARWLEPYTEPTLAELARQGVTEVDVVCPGFVADCLETLEEISQECRDAFVAAGGRQFRYIPALNDCPPWIEGLTDLVERQLRGWPTGNP.

2 residues coordinate Fe cation: His-228 and Glu-309.

This sequence belongs to the ferrochelatase family.

Its subcellular location is the cytoplasm. The catalysed reaction is heme b + 2 H(+) = protoporphyrin IX + Fe(2+). It participates in porphyrin-containing compound metabolism; protoheme biosynthesis; protoheme from protoporphyrin-IX: step 1/1. Its function is as follows. Catalyzes the ferrous insertion into protoporphyrin IX. The polypeptide is Ferrochelatase (Bordetella pertussis (strain Tohama I / ATCC BAA-589 / NCTC 13251)).